A 98-amino-acid chain; its full sequence is Probable sodium channel toxin Ts27 (98 aa).

The first 22 residues, 1–22 (MYNMVSLFIVAVLLLTYANVEG), serve as a signal peptide directing secretion. 4 disulfide bridges follow: cysteine 36–cysteine 88, cysteine 40–cysteine 63, cysteine 49–cysteine 68, and cysteine 53–cysteine 70.

Belongs to the long (4 C-C) scorpion toxin superfamily. Sodium channel inhibitor family. As to expression, expressed by the venom gland.

The protein localises to the secreted. Its function is as follows. Probable sodium channel toxin. This Tityus serrulatus (Brazilian scorpion) protein is Probable sodium channel toxin Ts27.